Consider the following 414-residue polypeptide: DNA primase small subunit PriS (414 aa).

Catalysis depends on residues aspartate 98, aspartate 100, and aspartate 312.

This sequence belongs to the eukaryotic-type primase small subunit family. As to quaternary structure, heterodimer of a small subunit (PriS) and a large subunit (PriL). Mg(2+) is required as a cofactor. Mn(2+) serves as cofactor.

In terms of biological role, catalytic subunit of DNA primase, an RNA polymerase that catalyzes the synthesis of short RNA molecules used as primers for DNA polymerase during DNA replication. The small subunit contains the primase catalytic core and has DNA synthesis activity on its own. Binding to the large subunit stabilizes and modulates the activity, increasing the rate of DNA synthesis while decreasing the length of the DNA fragments, and conferring RNA synthesis capability. The DNA polymerase activity may enable DNA primase to also catalyze primer extension after primer synthesis. May also play a role in DNA repair. The polypeptide is DNA primase small subunit PriS (Methanosarcina barkeri (strain Fusaro / DSM 804)).